We begin with the raw amino-acid sequence, 499 residues long: Lysine--tRNA ligase (499 aa).

Positions 408 and 415 each coordinate Mg(2+).

Belongs to the class-II aminoacyl-tRNA synthetase family. Homodimer. The cofactor is Mg(2+).

It localises to the cytoplasm. The catalysed reaction is tRNA(Lys) + L-lysine + ATP = L-lysyl-tRNA(Lys) + AMP + diphosphate. The chain is Lysine--tRNA ligase from Bacillus cereus (strain AH820).